The primary structure comprises 152 residues: Aspartate carbamoyltransferase regulatory chain (152 aa).

The Zn(2+) site is built by Cys109, Cys114, Cys138, and Cys141.

This sequence belongs to the PyrI family. Contains catalytic and regulatory chains. Zn(2+) serves as cofactor.

Involved in allosteric regulation of aspartate carbamoyltransferase. The chain is Aspartate carbamoyltransferase regulatory chain from Thermoplasma volcanium (strain ATCC 51530 / DSM 4299 / JCM 9571 / NBRC 15438 / GSS1).